A 78-amino-acid polypeptide reads, in one-letter code: Exodeoxyribonuclease 7 small subunit (78 aa).

The protein belongs to the XseB family. As to quaternary structure, heterooligomer composed of large and small subunits.

The protein localises to the cytoplasm. It catalyses the reaction Exonucleolytic cleavage in either 5'- to 3'- or 3'- to 5'-direction to yield nucleoside 5'-phosphates.. Bidirectionally degrades single-stranded DNA into large acid-insoluble oligonucleotides, which are then degraded further into small acid-soluble oligonucleotides. In Psychromonas ingrahamii (strain DSM 17664 / CCUG 51855 / 37), this protein is Exodeoxyribonuclease 7 small subunit.